Consider the following 507-residue polypeptide: Putative propionyl-CoA carboxylase beta chain (507 aa).

Positions 1 to 25 (MNEHMDHFYTKRKQAEEGGGREKLA) are enriched in basic and acidic residues. A disordered region spans residues 1-30 (MNEHMDHFYTKRKQAEEGGGREKLAQQRQK). The region spanning 1–254 (MNEHMDHFYT…NGRTTEPKPE (254 aa)) is the CoA carboxyltransferase N-terminal domain. The segment at 1–501 (MNEHMDHFYT…HKTEERPKKK (501 aa)) is carboxyltransferase. The region spanning 256 to 501 (EASRPLLNRL…HKTEERPKKK (246 aa)) is the CoA carboxyltransferase C-terminal domain.

It belongs to the AccD/PCCB family. In terms of assembly, probably a dodecamer composed of six biotin-containing alpha subunits and six beta subunits.

It catalyses the reaction propanoyl-CoA + hydrogencarbonate + ATP = (S)-methylmalonyl-CoA + ADP + phosphate + H(+). It functions in the pathway metabolic intermediate metabolism; propanoyl-CoA degradation; succinyl-CoA from propanoyl-CoA: step 1/3. This chain is Putative propionyl-CoA carboxylase beta chain (yqjD), found in Bacillus subtilis (strain 168).